Reading from the N-terminus, the 67-residue chain is Small ribosomal subunit protein bS21 (67 aa).

This sequence belongs to the bacterial ribosomal protein bS21 family.

In Aquifex aeolicus (strain VF5), this protein is Small ribosomal subunit protein bS21 (rpsU).